The following is a 599-amino-acid chain: NADH-ubiquinone oxidoreductase chain 5 (599 aa).

17 consecutive transmembrane segments (helical) span residues 1–21 (MALM…PLVF), 41–61 (FITS…IIIL), 79–99 (LDLY…SIME), 114–134 (FLNY…ANNM), 137–157 (LFIG…WWYG), 166–186 (LQAI…MAWF), 198–218 (IFSL…AAMG), 237–257 (TPVS…FLLI), 269–289 (IMTT…ICAL), 297–317 (IIAF…GINQ), 323–343 (LHIC…GSII), 362–382 (MPLT…TPFM), 400–420 (INSW…AYST), 453–473 (LMLG…PVNM), 478–498 (MPFT…IVAM), 509–529 (MYPN…PTII), and 578–598 (GMLK…MLIM).

Belongs to the complex I subunit 5 family.

It localises to the mitochondrion inner membrane. It catalyses the reaction a ubiquinone + NADH + 5 H(+)(in) = a ubiquinol + NAD(+) + 4 H(+)(out). Functionally, core subunit of the mitochondrial membrane respiratory chain NADH dehydrogenase (Complex I) that is believed to belong to the minimal assembly required for catalysis. Complex I functions in the transfer of electrons from NADH to the respiratory chain. The immediate electron acceptor for the enzyme is believed to be ubiquinone. This is NADH-ubiquinone oxidoreductase chain 5 (ND5) from Geomys personatus (Texas pocket gopher).